Here is a 391-residue protein sequence, read N- to C-terminus: Succinate--CoA ligase [ADP-forming] subunit beta (391 aa).

The region spanning 9–248 (KDILRKFGVA…ITEEDPFEVE (240 aa)) is the ATP-grasp domain. ATP is bound by residues Lys50, 57 to 59 (GRG), Glu103, Met106, and Glu111. Residues Asn203 and Asp217 each coordinate Mg(2+). Substrate is bound by residues Asn268 and 325–327 (GIV).

This sequence belongs to the succinate/malate CoA ligase beta subunit family. Heterotetramer of two alpha and two beta subunits. Mg(2+) serves as cofactor.

The enzyme catalyses succinate + ATP + CoA = succinyl-CoA + ADP + phosphate. It carries out the reaction GTP + succinate + CoA = succinyl-CoA + GDP + phosphate. It participates in carbohydrate metabolism; tricarboxylic acid cycle; succinate from succinyl-CoA (ligase route): step 1/1. In terms of biological role, succinyl-CoA synthetase functions in the citric acid cycle (TCA), coupling the hydrolysis of succinyl-CoA to the synthesis of either ATP or GTP and thus represents the only step of substrate-level phosphorylation in the TCA. The beta subunit provides nucleotide specificity of the enzyme and binds the substrate succinate, while the binding sites for coenzyme A and phosphate are found in the alpha subunit. In Chlorobium phaeovibrioides (strain DSM 265 / 1930) (Prosthecochloris vibrioformis (strain DSM 265)), this protein is Succinate--CoA ligase [ADP-forming] subunit beta.